The sequence spans 438 residues: Probable exopolygalacturonase B (438 aa).

The signal sequence occupies residues 1–15 (MYLLPLTLFLTAAFG). N-linked (GlcNAc...) asparagine glycosylation is found at Asn118, Asn185, and Asn225. The stretch at 209–248 (TNDVSFDNVYIHAFSTNASSDPANTDGMDSLDVDGVSFTN) is one PbH1 1 repeat. Asp255 serves as the catalytic Proton donor. Cys257 and Cys274 are joined by a disulfide. Asn263 and Asn275 each carry an N-linked (GlcNAc...) asparagine glycan. The active site involves His278. PbH1 repeat units lie at residues 295-316 (IENV…RLKA) and 327-348 (INNV…VLDQ). 4 N-linked (GlcNAc...) asparagine glycosylation sites follow: Asn302, Asn329, Asn354, and Asn366. Cys392 and Cys398 are joined by a disulfide. Residues 398–430 (CTNITLSNVNLTSPKGTAEIVCDDIQGGIGVDC) form a PbH1 4 repeat. N-linked (GlcNAc...) asparagine glycosylation is found at Asn400 and Asn407.

Belongs to the glycosyl hydrolase 28 family.

It is found in the secreted. The enzyme catalyses [(1-&gt;4)-alpha-D-galacturonosyl](n) + H2O = alpha-D-galacturonate + [(1-&gt;4)-alpha-D-galacturonosyl](n-1). Functionally, specific in hydrolyzing the terminal glycosidic bond of polygalacturonic acid and oligogalacturonates. This is Probable exopolygalacturonase B (pgxB) from Aspergillus niger (strain ATCC MYA-4892 / CBS 513.88 / FGSC A1513).